The following is a 685-amino-acid chain: Bifunctional lycopene cyclase/phytoene synthase (685 aa).

Positions 15–255 (TLSYRHFHLL…LVSACFTFDR (241 aa)) are lycopene beta-cyclase. 7 consecutive transmembrane segments (helical) span residues 21–41 (FHLL…RPFL), 48–68 (KLIL…NLIV), 92–114 (YFFF…RWAL), 129–149 (LATP…KAAV), 156–176 (YFGM…WGSV), 187–207 (GLAP…ASDV), and 231–251 (LPIE…SACF). Residues 262–685 (QSVAENAPPL…RAVSAVYFGV (424 aa)) form a phytoene synthase region.

In the N-terminal section; belongs to the lycopene beta-cyclase family. The protein in the C-terminal section; belongs to the phytoene/squalene synthase family.

The protein resides in the membrane. The catalysed reaction is all-trans-lycopene = gamma-carotene. The enzyme catalyses gamma-carotene = all-trans-beta-carotene. It catalyses the reaction 2 (2E,6E,10E)-geranylgeranyl diphosphate = 15-cis-phytoene + 2 diphosphate. It participates in carotenoid biosynthesis; beta-carotene biosynthesis. Its pathway is carotenoid biosynthesis; phytoene biosynthesis; all-trans-phytoene from geranylgeranyl diphosphate: step 1/1. Bifunctional enzyme that catalyzes the reactions from geranylgeranyl diphosphate to phytoene (phytoene synthase) and lycopene to beta-carotene via the intermediate gamma-carotene (lycopene cyclase). This Sporisorium reilianum (strain SRZ2) (Maize head smut fungus) protein is Bifunctional lycopene cyclase/phytoene synthase.